Here is a 407-residue protein sequence, read N- to C-terminus: Transcriptional regulator alnR (407 aa).

The segment at residues 23–53 (SCDTCQEAKVKCSQHKPSCHRCLRHRQPCVY) is a DNA-binding region (zn(2)-C6 fungal-type). Residues 53–85 (YSPQRRSGRPPKRPSPSSRLGPESNNSGDDIHN) are disordered. Over residues 75–85 (ESNNSGDDIHN) the composition is skewed to polar residues.

The protein localises to the nucleus. Transcriptional regulator involved in the positive regulation of the expression of the gene cluster that mediates the biosynthesis of asperlin, a polyketide showing anti-inflammatory, antitumor and antibiotic activities. The protein is Transcriptional regulator alnR of Emericella nidulans (strain FGSC A4 / ATCC 38163 / CBS 112.46 / NRRL 194 / M139) (Aspergillus nidulans).